A 395-amino-acid polypeptide reads, in one-letter code: Glutamate N-acetyltransferase (395 aa).

Residues threonine 146, lysine 169, threonine 180, glutamate 263, asparagine 390, and threonine 395 each contribute to the substrate site. Residue threonine 180 is the Nucleophile of the active site.

It belongs to the ArgJ family. Heterotetramer of two alpha and two beta chains.

It is found in the cytoplasm. It catalyses the reaction N(2)-acetyl-L-ornithine + L-glutamate = N-acetyl-L-glutamate + L-ornithine. It participates in amino-acid biosynthesis; L-arginine biosynthesis; L-ornithine and N-acetyl-L-glutamate from L-glutamate and N(2)-acetyl-L-ornithine (cyclic): step 1/1. In terms of biological role, catalyzes the transfer of the acetyl group from N(2)-acetylornithine to glutamate, forming N-acetylglutamate and L-ornithine. In Methanosarcina acetivorans (strain ATCC 35395 / DSM 2834 / JCM 12185 / C2A), this protein is Glutamate N-acetyltransferase.